Reading from the N-terminus, the 400-residue chain is Phosphoglycerate kinase (400 aa).

Residues 22–24 (DFN), Arg-38, 61–64 (HLGR), Arg-119, and Arg-152 contribute to the substrate site. ATP contacts are provided by residues Lys-205, Gly-296, Glu-327, and 353-356 (GGDT).

Belongs to the phosphoglycerate kinase family. As to quaternary structure, monomer.

The protein localises to the cytoplasm. It catalyses the reaction (2R)-3-phosphoglycerate + ATP = (2R)-3-phospho-glyceroyl phosphate + ADP. It functions in the pathway carbohydrate degradation; glycolysis; pyruvate from D-glyceraldehyde 3-phosphate: step 2/5. The polypeptide is Phosphoglycerate kinase (Campylobacter jejuni subsp. jejuni serotype O:2 (strain ATCC 700819 / NCTC 11168)).